The chain runs to 336 residues: 4-hydroxy-3-methylbut-2-enyl diphosphate reductase (336 aa).

[4Fe-4S] cluster is bound at residue Cys-37. The (2E)-4-hydroxy-3-methylbut-2-enyl diphosphate site is built by His-66 and His-99. Dimethylallyl diphosphate is bound by residues His-66 and His-99. 2 residues coordinate isopentenyl diphosphate: His-66 and His-99. Cys-121 is a binding site for [4Fe-4S] cluster. His-149 contributes to the (2E)-4-hydroxy-3-methylbut-2-enyl diphosphate binding site. Residue His-149 participates in dimethylallyl diphosphate binding. His-149 contributes to the isopentenyl diphosphate binding site. Glu-151 (proton donor) is an active-site residue. A (2E)-4-hydroxy-3-methylbut-2-enyl diphosphate-binding site is contributed by Thr-189. Residue Cys-219 participates in [4Fe-4S] cluster binding. 4 residues coordinate (2E)-4-hydroxy-3-methylbut-2-enyl diphosphate: Ser-247, Ser-248, Asn-249, and Ser-292. Dimethylallyl diphosphate contacts are provided by Ser-247, Ser-248, Asn-249, and Ser-292. 4 residues coordinate isopentenyl diphosphate: Ser-247, Ser-248, Asn-249, and Ser-292.

This sequence belongs to the IspH family. [4Fe-4S] cluster is required as a cofactor.

The enzyme catalyses isopentenyl diphosphate + 2 oxidized [2Fe-2S]-[ferredoxin] + H2O = (2E)-4-hydroxy-3-methylbut-2-enyl diphosphate + 2 reduced [2Fe-2S]-[ferredoxin] + 2 H(+). The catalysed reaction is dimethylallyl diphosphate + 2 oxidized [2Fe-2S]-[ferredoxin] + H2O = (2E)-4-hydroxy-3-methylbut-2-enyl diphosphate + 2 reduced [2Fe-2S]-[ferredoxin] + 2 H(+). It functions in the pathway isoprenoid biosynthesis; dimethylallyl diphosphate biosynthesis; dimethylallyl diphosphate from (2E)-4-hydroxy-3-methylbutenyl diphosphate: step 1/1. It participates in isoprenoid biosynthesis; isopentenyl diphosphate biosynthesis via DXP pathway; isopentenyl diphosphate from 1-deoxy-D-xylulose 5-phosphate: step 6/6. In terms of biological role, catalyzes the conversion of 1-hydroxy-2-methyl-2-(E)-butenyl 4-diphosphate (HMBPP) into a mixture of isopentenyl diphosphate (IPP) and dimethylallyl diphosphate (DMAPP). Acts in the terminal step of the DOXP/MEP pathway for isoprenoid precursor biosynthesis. In Rhodococcus opacus (strain B4), this protein is 4-hydroxy-3-methylbut-2-enyl diphosphate reductase.